The sequence spans 96 residues: Putative pterin-4-alpha-carbinolamine dehydratase (96 aa).

This sequence belongs to the pterin-4-alpha-carbinolamine dehydratase family.

The catalysed reaction is (4aS,6R)-4a-hydroxy-L-erythro-5,6,7,8-tetrahydrobiopterin = (6R)-L-erythro-6,7-dihydrobiopterin + H2O. The sequence is that of Putative pterin-4-alpha-carbinolamine dehydratase from Paraburkholderia phytofirmans (strain DSM 17436 / LMG 22146 / PsJN) (Burkholderia phytofirmans).